We begin with the raw amino-acid sequence, 65 residues long: Large ribosomal subunit protein bL35 (65 aa).

Belongs to the bacterial ribosomal protein bL35 family.

This chain is Large ribosomal subunit protein bL35, found in Aromatoleum aromaticum (strain DSM 19018 / LMG 30748 / EbN1) (Azoarcus sp. (strain EbN1)).